A 427-amino-acid polypeptide reads, in one-letter code: Serine--tRNA ligase (427 aa).

231-233 (TAE) contributes to the L-serine binding site. 262-264 (RSE) serves as a coordination point for ATP. E285 contacts L-serine. 349 to 352 (EISS) is a binding site for ATP. L-serine is bound at residue S385.

Belongs to the class-II aminoacyl-tRNA synthetase family. Type-1 seryl-tRNA synthetase subfamily. In terms of assembly, homodimer. The tRNA molecule binds across the dimer.

The protein resides in the cytoplasm. It carries out the reaction tRNA(Ser) + L-serine + ATP = L-seryl-tRNA(Ser) + AMP + diphosphate + H(+). It catalyses the reaction tRNA(Sec) + L-serine + ATP = L-seryl-tRNA(Sec) + AMP + diphosphate + H(+). It functions in the pathway aminoacyl-tRNA biosynthesis; selenocysteinyl-tRNA(Sec) biosynthesis; L-seryl-tRNA(Sec) from L-serine and tRNA(Sec): step 1/1. Its function is as follows. Catalyzes the attachment of serine to tRNA(Ser). Is also able to aminoacylate tRNA(Sec) with serine, to form the misacylated tRNA L-seryl-tRNA(Sec), which will be further converted into selenocysteinyl-tRNA(Sec). This is Serine--tRNA ligase from Brucella canis (strain ATCC 23365 / NCTC 10854 / RM-666).